A 386-amino-acid chain; its full sequence is Acyl-CoA ligase lcsD (386 aa).

Residues 62-132 (ELEQTLLAIQ…ELLPACKIIQ (71 aa)) are SBD1. 107–115 (AVGASGISK) provides a ligand contact to ATP. Residues 133–195 (GYGMTETTGV…LRSPSVVIGY (63 aa)) form an SBD2 region. Position 137 (threonine 137) interacts with substrate. Aspartate 216 and arginine 235 together coordinate ATP. CoA contacts are provided by residues 243–245 (RGL) and 313–316 (HLDG). Lysine 331 provides a ligand contact to ATP. Positions 352 to 386 (REKAANGVHKVHVNGVKRPEKMEVFDLSSDDEDDD) are disordered.

This sequence belongs to the ATP-dependent AMP-binding enzyme family.

Its pathway is secondary metabolite biosynthesis. In terms of biological role, acyl-CoA ligase; part of the gene cluster that mediates the biosynthesis of the lipopeptide antibiotics leucinostatins that show extensive biological activities, including antimalarial, antiviral, antibacterial, antifungal, and antitumor activities, as well as phytotoxic. Leucinostatin A contains nine amino acid residues, including the unusual amino acid 4-methyl-L-proline (MePro), 2-amino-6-hydroxy-4-methyl-8-oxodecanoic acid (AHyMeOA), 3-hydroxyleucine (HyLeu), alpha-aminoisobutyric acid (AIB), beta-Ala, a 4-methylhex-2-enoic acid at the N-terminus as well as a N1,N1-dimethylpropane-1,2-diamine (DPD) at the C-terminus. The biosynthesis of leucinostatins is probably initiated with the assembly of 4-methylhex-2-enoic acid by a reducing PKS. Two reducing polyketide synthases, lcsB and lcsC, have been identified in the cluster and it is not clear which is the one that assembles 4-methylhex-2-enoic acid since both contain KS, AT, DH, cMT, ER, KR and ACP domains. The polyketide residue might be transferred to the NRPS lcsA, mediated by two additional enzymes, the acyl-CoA ligase lcsD and the thioesterase lcsE. The linear polyketide carboxylic acid, which is released from PKS, is converted to a CoA thioester by lcsD, and then lcsE hydrolyzes the thiol bond and shuttles the polyketide intermediate to lcsA. The C domain of the first module catalyzed the condensation of 4-methylhex-2-enoic acid and MePro carried by domain A1, followed by successive condensations of nine amino acids to trigger the elongation of the linear peptide. A5 and A6 domains of lcsA are proposed to incorporate leucine, A2 AHyMeOA, and A3 incorporates HyLeu. A4, A7 and A8 incorporate AIB. The AHyMeOA in leucinostatin A activated by the A2 might be produced by the second PKS (lcsB or lcsC) present within the cluster. The MePro is probably produced via leucine cyclization and may originate from a separate pathway, independent of the cluster. Another nonproteinogenic amino acid, beta-Ala, could be produced by an aspartic acid decarboxylase also localized outside of the cluster. Two candidates are VFPBJ_01400 and VFPBJ_10476. The final peptide scaffold may be released by the NAD(P)H-dependent thioester reductase (TE) at the C-terminal region of lcsA. Transamination of the lcsA product by the transaminase lcsP may produce DPD at the C-terminus. Further hydroxylation steps performed alternatively by the cytochrome P450 monooxygenases lcsI, lcsK and lcsN then yield the non-methylated leucinostatins precursor. It is also possible that leucines can be hydroxylated prior to their incorporation into the peptide. Varying extents of methylation then lead to the formation of leucinostatins A and B. This chain is Acyl-CoA ligase lcsD, found in Purpureocillium lilacinum (Paecilomyces lilacinus).